Reading from the N-terminus, the 254-residue chain is 3-deoxy-manno-octulosonate cytidylyltransferase (254 aa).

Belongs to the KdsB family.

The protein localises to the cytoplasm. The catalysed reaction is 3-deoxy-alpha-D-manno-oct-2-ulosonate + CTP = CMP-3-deoxy-beta-D-manno-octulosonate + diphosphate. Its pathway is nucleotide-sugar biosynthesis; CMP-3-deoxy-D-manno-octulosonate biosynthesis; CMP-3-deoxy-D-manno-octulosonate from 3-deoxy-D-manno-octulosonate and CTP: step 1/1. In terms of biological role, activates KDO (a required 8-carbon sugar) for incorporation into bacterial lipopolysaccharide in Gram-negative bacteria. The protein is 3-deoxy-manno-octulosonate cytidylyltransferase of Lawsonia intracellularis (strain PHE/MN1-00).